A 384-amino-acid chain; its full sequence is 1-deoxy-D-xylulose 5-phosphate reductoisomerase (384 aa).

Residues threonine 10, glycine 11, serine 12, isoleucine 13, arginine 37, asparagine 38, and asparagine 124 each contribute to the NADPH site. A 1-deoxy-D-xylulose 5-phosphate-binding site is contributed by lysine 125. Glutamate 126 provides a ligand contact to NADPH. Position 150 (aspartate 150) interacts with Mn(2+). Residues serine 151, glutamate 152, serine 176, and histidine 199 each contribute to the 1-deoxy-D-xylulose 5-phosphate site. Glutamate 152 serves as a coordination point for Mn(2+). Glycine 205 lines the NADPH pocket. Serine 212, asparagine 217, lysine 218, and glutamate 221 together coordinate 1-deoxy-D-xylulose 5-phosphate. Glutamate 221 serves as a coordination point for Mn(2+).

Belongs to the DXR family. Mg(2+) is required as a cofactor. It depends on Mn(2+) as a cofactor.

The enzyme catalyses 2-C-methyl-D-erythritol 4-phosphate + NADP(+) = 1-deoxy-D-xylulose 5-phosphate + NADPH + H(+). The protein operates within isoprenoid biosynthesis; isopentenyl diphosphate biosynthesis via DXP pathway; isopentenyl diphosphate from 1-deoxy-D-xylulose 5-phosphate: step 1/6. In terms of biological role, catalyzes the NADPH-dependent rearrangement and reduction of 1-deoxy-D-xylulose-5-phosphate (DXP) to 2-C-methyl-D-erythritol 4-phosphate (MEP). This chain is 1-deoxy-D-xylulose 5-phosphate reductoisomerase, found in Clostridium perfringens (strain 13 / Type A).